Here is an 87-residue protein sequence, read N- to C-terminus: Small ribosomal subunit protein bS18B (87 aa).

It belongs to the bacterial ribosomal protein bS18 family. As to quaternary structure, part of the 30S ribosomal subunit. Forms a tight heterodimer with protein bS6.

Binds as a heterodimer with protein bS6 to the central domain of the 16S rRNA, where it helps stabilize the platform of the 30S subunit. The sequence is that of Small ribosomal subunit protein bS18B from Mycolicibacterium vanbaalenii (strain DSM 7251 / JCM 13017 / BCRC 16820 / KCTC 9966 / NRRL B-24157 / PYR-1) (Mycobacterium vanbaalenii).